Reading from the N-terminus, the 79-residue chain is uncharacterized protein (79 aa).

2 helical membrane-spanning segments follow: residues 28 to 48 (CIILSGFAGLCMAYLYYALLA) and 51 to 71 (VALTEAILGGAILPALFAFTV).

The protein resides in the cell membrane. This is an uncharacterized protein from Methanocaldococcus jannaschii (strain ATCC 43067 / DSM 2661 / JAL-1 / JCM 10045 / NBRC 100440) (Methanococcus jannaschii).